The chain runs to 618 residues: Putative UDP-glucuronate:xylan alpha-glucuronosyltransferase 3 (618 aa).

Residues 32–54 traverse the membrane as a helical; Signal-anchor for type II membrane protein segment; sequence GVKFNTLKLVLICIMLGALFTIY. Mn(2+)-binding residues include Asp-379 and Asp-381. Residues 379 to 381, 408 to 410, 435 to 439, and 489 to 495 contribute to the substrate site; these read DAD, NSG, NGGDQ, and HYLGYNK. Mn(2+) is bound at residue His-489. The span at 598–608 shows a compositional bias: low complexity; it reads TNNSSTTTTSS. Residues 598-618 are disordered; it reads TNNSSTTTTSSPPHKTALPSL.

This sequence belongs to the glycosyltransferase 8 family. Glycogenin subfamily. Mn(2+) serves as cofactor.

The protein localises to the golgi apparatus membrane. Its function is as follows. May be involved in the substitutions of the xylan backbone in stem glucuronoxylan. The protein is Putative UDP-glucuronate:xylan alpha-glucuronosyltransferase 3 (GUX3) of Arabidopsis thaliana (Mouse-ear cress).